A 365-amino-acid chain; its full sequence is Putative F-box/kelch-repeat protein At4g39290 (365 aa).

One can recognise an F-box domain in the interval 10 to 58; it reads QMTFSMLPDDLVLNCLARVSKVYYPSLSFVSKKFRSLIASTELQELRSF. Kelch repeat units follow at residues 118–165 and 167–213; these read DIYA…CVLN and KIYV…KIVG.

The polypeptide is Putative F-box/kelch-repeat protein At4g39290 (Arabidopsis thaliana (Mouse-ear cress)).